The following is a 67-amino-acid chain: MKLKIKFVGFDQKEVEVEVNGQRYSEILESLGINPETVVVVKDNIPVPVDDVAEGGEVKVVRVISGG.

This is an uncharacterized protein from Archaeoglobus fulgidus (strain ATCC 49558 / DSM 4304 / JCM 9628 / NBRC 100126 / VC-16).